Consider the following 530-residue polypeptide: UPF0422 protein lpp3030 (530 aa).

Residues 1–19 form the signal peptide; the sequence is MKFKKIILALACLSSPLYA. The stretch at 20 to 66 forms a coiled coil; sequence DQDQQLKSEIQRLQHQAEDLQAQLNRLQKQLANHKSSQQKHEQQAAA. The interval 50-81 is disordered; that stretch reads LANHKSSQQKHEQQAAAKPAEPKSKPTTKSGA. Over residues 63–79 the composition is skewed to low complexity; sequence QAAAKPAEPKSKPTTKS.

It belongs to the UPF0422 family.

The protein is UPF0422 protein lpp3030 of Legionella pneumophila (strain Paris).